A 547-amino-acid chain; its full sequence is Glucose-6-phosphate isomerase (547 aa).

Glutamate 351 (proton donor) is an active-site residue. Residues histidine 382 and lysine 509 contribute to the active site.

Belongs to the GPI family.

Its subcellular location is the cytoplasm. It catalyses the reaction alpha-D-glucose 6-phosphate = beta-D-fructose 6-phosphate. The protein operates within carbohydrate biosynthesis; gluconeogenesis. It functions in the pathway carbohydrate degradation; glycolysis; D-glyceraldehyde 3-phosphate and glycerone phosphate from D-glucose: step 2/4. Catalyzes the reversible isomerization of glucose-6-phosphate to fructose-6-phosphate. This is Glucose-6-phosphate isomerase from Coxiella burnetii (strain CbuK_Q154) (Coxiella burnetii (strain Q154)).